The primary structure comprises 143 residues: MHTYKFIQIALLFASVALAIPTPPSPPNPPPVPQLPNSETKSNRLVSHSCEFCGVVKPSGPAYLEHYHQNHREEVWGKLATPSPPNPPPVPTQKVETHAPKTHGCEWCNKVEPSGPAYIKHYKENHEDQVWGKWAGQDAKASP.

The first 19 residues, 1 to 19, serve as a signal peptide directing secretion; that stretch reads MHTYKFIQIALLFASVALA. Positions 24–34 are enriched in pro residues; the sequence is PSPPNPPPVPQ. The interval 24 to 43 is disordered; sequence PSPPNPPPVPQLPNSETKSN. Residues 48–71 form a C2H2-type 1 zinc finger; it reads HSCEFCGVVKPSGPAYLEHYHQNH. The interval 77-99 is disordered; the sequence is GKLATPSPPNPPPVPTQKVETHA. A compositionally biased stretch (pro residues) spans 82–91; sequence PSPPNPPPVP. The segment at 103 to 126 adopts a C2H2-type 2 zinc-finger fold; it reads HGCEWCNKVEPSGPAYIKHYKENH.

The protein localises to the secreted. It localises to the host nucleus. In terms of biological role, probable secreted effector that translocates into the nuclei of host cells to reprogram the expression of targeted genes by binding on effector binding elements in rice. In Pyricularia oryzae (strain 70-15 / ATCC MYA-4617 / FGSC 8958) (Rice blast fungus), this protein is Host transcription reprogramming factor 8.